The chain runs to 104 residues: Large ribosomal subunit protein bL21 (104 aa).

The protein belongs to the bacterial ribosomal protein bL21 family. As to quaternary structure, part of the 50S ribosomal subunit. Contacts protein L20.

Functionally, this protein binds to 23S rRNA in the presence of protein L20. The polypeptide is Large ribosomal subunit protein bL21 (Tropheryma whipplei (strain Twist) (Whipple's bacillus)).